The following is an 82-amino-acid chain: UPF0180 protein BT9727_1277 (82 aa).

This sequence belongs to the UPF0180 family.

The sequence is that of UPF0180 protein BT9727_1277 from Bacillus thuringiensis subsp. konkukian (strain 97-27).